The primary structure comprises 87 residues: MKPIVYMLLFCAFTVVILGHPNNHGALIPHHDKLPNGESCTRPGYSCSESNQCCTPVDGETFTYGCGRAWMEGSKICYICNRESSMC.

The signal sequence occupies residues 1–19 (MKPIVYMLLFCAFTVVILG). Disulfide bonds link Cys40-Cys54, Cys40-Cys77, Cys53-Cys66, and Cys80-Cys87.

Belongs to the neurotoxin 27 (Jztx-72) family. ICK-41 subfamily. As to expression, expressed by the venom gland.

It is found in the secreted. Functionally, probable neurotoxin with ion channel impairing activity. The protein is Toxin ICK-42 of Trittame loki (Brush-footed trapdoor spider).